The chain runs to 648 residues: Transcription termination factor FttA (648 aa).

The segment at 9–76 is KHa; sequence DDILKEIREI…ISVRPDPDIL (68 aa). Residues 77 to 144 are KHb; that stretch reads LPPEKAEELI…WAPRVVRTPP (68 aa). The tract at residues 185–395 is metallo-beta-lactamase N-terminus; sequence WIRITGLGGF…LVMESTYGGS (211 aa). The Zn(2+) site is built by His-253, His-255, Asp-257, His-258, His-341, and Asp-364. The segment at 396 to 589 is beta-Casp; the sequence is NDYQMPREEA…MEVHTIDGFS (194 aa). The tract at residues 590-648 is metallo-beta-lactamase C-terminus; sequence GHADRRELMSYVARVRPRPERIITVHGEAHKCLDLSSSIHKKFGISTRAPNNLDAIRLK. His-615 is a binding site for Zn(2+).

Belongs to the metallo-beta-lactamase superfamily. RNA-metabolizing metallo-beta-lactamase-like family. FttA subfamily. Homodimer. Probably interacts transiently with RNA polymerase (RNAP), (via at least the RNAP stalk subunits Rpo4 and Rpo7), interacts transiently with the Spt4-Spt5 complex. Requires Zn(2+) as cofactor.

Transcription termination is stimulated by the Spt4-Spt5 complex. Dipicolinic acid inhibits FttA-mediated termination in vitro and inhibits growth in vivo. In terms of biological role, terminates transcription on the whole genome. Termination is linked to FttA-mediated RNA cleavage and does not require NTP hydrolysis. Cleaves endonucleolytically at the RNA exit channel of RNA polymerase (RNAP); the 5'-3' exonuclease activity of this protein degrades the nascent RNA released from RNAP. Functionally, facilitates transcription termination; addition of this factor to stalled transcription elongation complexes (TEC) promotes nascent transcript cleavage and releases RNA polymerase (RNAP) from DNA in vitro. Transcription termination competes with productive transcription elongation. Termination is stimulated by C-rich transcripts and inhibited by G-rich transcripts; the Spt4-Spt5 complex enhances termination on C-less transcripts. Yields an approximately 100 nucleotide RNA, consistent with endonucleolytic cleavage at the RNA exit channel of RNAP. The protein is Transcription termination factor FttA of Thermococcus kodakarensis (strain ATCC BAA-918 / JCM 12380 / KOD1) (Pyrococcus kodakaraensis (strain KOD1)).